Here is a 513-residue protein sequence, read N- to C-terminus: Zinc finger CCCH-type with G patch domain-containing protein (513 aa).

The segment at 155–178 (PCSYYLEGECRFDEAKCRFSHGAL) adopts a C3H1-type zinc-finger fold. Acidic residues-rich tracts occupy residues 252 to 261 (DQDEDDELSS) and 273 to 283 (SDEAESDMDDL). Residues 252–283 (DQDEDDELSSEESTSSMRDASSDEAESDMDDL) are disordered. One can recognise a G-patch domain in the interval 312-358 (TRGIGSKLMEKMGYIHGTGLGSDGRGIVTPVSAQILPQGRSLDACME). A compositionally biased stretch (polar residues) spans 477–495 (QVQMQSHKQELATLQAQER). Positions 477-513 (QVQMQSHKQELATLQAQERSLSKEQQTRKSKNKMFEF) are disordered. The segment covering 496-513 (SLSKEQQTRKSKNKMFEF) has biased composition (basic and acidic residues).

It localises to the nucleus. Its function is as follows. Transcription repressor. The sequence is that of Zinc finger CCCH-type with G patch domain-containing protein from Drosophila simulans (Fruit fly).